A 207-amino-acid polypeptide reads, in one-letter code: Guanylate kinase (207 aa).

The 181-residue stretch at 4-184 (GLLFIVSAPS…AVSDLYKIIR (181 aa)) folds into the Guanylate kinase-like domain. 11–18 (APSGTGKS) contributes to the ATP binding site.

The protein belongs to the guanylate kinase family.

The protein localises to the cytoplasm. The catalysed reaction is GMP + ATP = GDP + ADP. Essential for recycling GMP and indirectly, cGMP. The sequence is that of Guanylate kinase from Buchnera aphidicola subsp. Baizongia pistaciae (strain Bp).